The primary structure comprises 161 residues: MKNSSNKYLDLPYRPGVGMMILNADNQIFVGKRIDTKISAWQMPQGGIVPGETPSIAAMREMLEEIGSNKGYIIAESKCWYSYDVPSFLIPKLWNGNFRGQKQRWFLIRFTGNNKDINIHTSNPEFDQWRWTSLDELLSIIIPFKRKLYQAVVKEFESLIQ.

The region spanning Pro12–Lys154 is the Nudix hydrolase domain. The Nudix box signature appears at Gly46–Gly67.

It belongs to the Nudix hydrolase family. RppH subfamily. A divalent metal cation serves as cofactor.

Its function is as follows. Accelerates the degradation of transcripts by removing pyrophosphate from the 5'-end of triphosphorylated RNA, leading to a more labile monophosphorylated state that can stimulate subsequent ribonuclease cleavage. This chain is RNA pyrophosphohydrolase, found in Rickettsia typhi (strain ATCC VR-144 / Wilmington).